The sequence spans 245 residues: tRNA (guanine-N(1)-)-methyltransferase (245 aa).

Residues G113 and 133 to 138 (IGDYVL) contribute to the S-adenosyl-L-methionine site.

It belongs to the RNA methyltransferase TrmD family. In terms of assembly, homodimer.

It is found in the cytoplasm. It catalyses the reaction guanosine(37) in tRNA + S-adenosyl-L-methionine = N(1)-methylguanosine(37) in tRNA + S-adenosyl-L-homocysteine + H(+). Specifically methylates guanosine-37 in various tRNAs. This is tRNA (guanine-N(1)-)-methyltransferase from Actinobacillus succinogenes (strain ATCC 55618 / DSM 22257 / CCUG 43843 / 130Z).